Consider the following 467-residue polypeptide: Ethanolamine ammonia-lyase reactivase EutA (467 aa).

The protein belongs to the EutA family.

It is found in the bacterial microcompartment. The protein operates within amine and polyamine degradation; ethanolamine degradation. In terms of biological role, reactivates suicidally inhibited ethanolamine ammonia-lyase (EAL), cyanocobalamin-inactivated EAL and O(2)-inactivated EAL; requires Mg(2+), ATP and adenosylcobalamin. Reactivation probably occurs by the ATP-dependent exchange of cobalamin. Protects EAL from inhibition by CN-B12, does not have adenosylation activity. Its function is as follows. Expression of the eut operon allows this bacteria to use ethanolamine as a carbon, nitrogen and energy source. It relies on cobalamin (vitamin B12) both as a cofactor for the ethanolamine ammonia-lyase (EAL) activity and to induce the operon. EA enhances bacterial survival in macrophages in a concentration-dependent manner, suggesting it is an important nutrient during infection. The protein is Ethanolamine ammonia-lyase reactivase EutA of Salmonella typhimurium (strain LT2 / SGSC1412 / ATCC 700720).